The chain runs to 153 residues: Cytochrome c-type biogenesis protein CcmE (153 aa).

The Cytoplasmic portion of the chain corresponds to 1–7 (MKPRHKR). A helical; Signal-anchor for type II membrane protein transmembrane segment spans residues 8 to 28 (LAIAGGVLVAVGAIATLVLNA). Residues 29–153 (FQSNLVFFYS…SSQAATGDPR (125 aa)) lie on the Periplasmic side of the membrane. Heme contacts are provided by H120 and Y124. The segment at 130–153 (AEALKRAKEGGQMQSSQAATGDPR) is disordered. The span at 141–153 (QMQSSQAATGDPR) shows a compositional bias: polar residues.

It belongs to the CcmE/CycJ family.

Its subcellular location is the cell inner membrane. In terms of biological role, heme chaperone required for the biogenesis of c-type cytochromes. Transiently binds heme delivered by CcmC and transfers the heme to apo-cytochromes in a process facilitated by CcmF and CcmH. This Leptothrix cholodnii (strain ATCC 51168 / LMG 8142 / SP-6) (Leptothrix discophora (strain SP-6)) protein is Cytochrome c-type biogenesis protein CcmE.